Consider the following 390-residue polypeptide: 3-ketoacyl-CoA thiolase (390 aa).

The Acyl-thioester intermediate role is filled by Cys95. Catalysis depends on proton acceptor residues His346 and Cys376.

This sequence belongs to the thiolase-like superfamily. Thiolase family. In terms of assembly, heterotetramer of two alpha chains (FadB) and two beta chains (FadA).

It localises to the cytoplasm. It catalyses the reaction an acyl-CoA + acetyl-CoA = a 3-oxoacyl-CoA + CoA. It functions in the pathway lipid metabolism; fatty acid beta-oxidation. Functionally, catalyzes the final step of fatty acid oxidation in which acetyl-CoA is released and the CoA ester of a fatty acid two carbons shorter is formed. This chain is 3-ketoacyl-CoA thiolase, found in Psychrobacter arcticus (strain DSM 17307 / VKM B-2377 / 273-4).